Consider the following 212-residue polypeptide: Small ribosomal subunit protein eS1 (212 aa).

This sequence belongs to the eukaryotic ribosomal protein eS1 family.

This chain is Small ribosomal subunit protein eS1, found in Ignicoccus hospitalis (strain KIN4/I / DSM 18386 / JCM 14125).